Consider the following 312-residue polypeptide: Olfactory receptor 2J2 (312 aa).

Residues 1 to 26 (MMIKKNASSEDFFILLGFSNWPQLEV) are Extracellular-facing. Asn-6 carries N-linked (GlcNAc...) asparagine glycosylation. The chain crosses the membrane as a helical span at residues 27–50 (VLFVVILIFYLMTLTGNLFIIILS). The Cytoplasmic segment spans residues 51–58 (YVDSHLHT). Residues 59–80 (PMYFFLSNLSFLDLCHTTSSIP) traverse the membrane as a helical segment. The Extracellular segment spans residues 81 to 101 (QLLVNLRGPEKTISYAGCMVQ). Residues Cys-98 and Cys-190 are joined by a disulfide bond. A helical transmembrane segment spans residues 102–121 (LYFVLALGIAECVLLVVMSY). The Cytoplasmic segment spans residues 122–140 (DRYVAVCRPLHYTVLMHPR). The chain crosses the membrane as a helical span at residues 141–159 (FCHLLAAASWVIGFTISAL). Topologically, residues 160–196 (HSSFTFWVPLCGHRLVDHFFCEVPALLRLSCVDTHAN) are extracellular. A helical transmembrane segment spans residues 197–220 (ELTLMVMSSIFVLIPLILILTAYG). Over 221 to 237 (AIARAVLSMQSTTGLQK) the chain is Cytoplasmic. Residues 238–260 (VFRTCGAHLMVVSLFFIPVMCMY) form a helical membrane-spanning segment. Over 261 to 273 (LQPPSENSPDQGK) the chain is Extracellular. A helical transmembrane segment spans residues 274-293 (FIALFYTVVTPSLNPLIYTL). Topologically, residues 294–312 (RNKHVKGAAKRLLGWEWGK) are cytoplasmic.

This sequence belongs to the G-protein coupled receptor 1 family.

The protein resides in the cell membrane. Functionally, odorant receptor. This chain is Olfactory receptor 2J2 (OR2J2), found in Homo sapiens (Human).